An 84-amino-acid polypeptide reads, in one-letter code: GTP cyclohydrolase 1 feedback regulatory protein (84 aa).

The protein belongs to the GFRP family. In terms of assembly, homopentamer. Forms a complex with GCH1 where a GCH1 homodecamer is sandwiched by two GFRP homopentamers.

It localises to the nucleus. Its subcellular location is the nucleus membrane. The protein localises to the cytoplasm. It is found in the cytosol. Functionally, mediates tetrahydrobiopterin inhibition of GTP cyclohydrolase 1. The polypeptide is GTP cyclohydrolase 1 feedback regulatory protein (gchfr) (Xenopus laevis (African clawed frog)).